A 197-amino-acid chain; its full sequence is Imidazoleglycerol-phosphate dehydratase (197 aa).

It belongs to the imidazoleglycerol-phosphate dehydratase family.

Its subcellular location is the cytoplasm. The catalysed reaction is D-erythro-1-(imidazol-4-yl)glycerol 3-phosphate = 3-(imidazol-4-yl)-2-oxopropyl phosphate + H2O. It functions in the pathway amino-acid biosynthesis; L-histidine biosynthesis; L-histidine from 5-phospho-alpha-D-ribose 1-diphosphate: step 6/9. This chain is Imidazoleglycerol-phosphate dehydratase, found in Bradyrhizobium sp. (strain ORS 278).